The following is a 56-amino-acid chain: Large ribosomal subunit protein bL33A (56 aa).

Belongs to the bacterial ribosomal protein bL33 family.

The sequence is that of Large ribosomal subunit protein bL33A from Nocardia farcinica (strain IFM 10152).